Here is a 437-residue protein sequence, read N- to C-terminus: Lipid II isoglutaminyl synthase (glutamine-hydrolyzing) subunit MurT (437 aa).

Zn(2+) contacts are provided by C202, C205, C224, and C226. Residue D349 is part of the active site.

Belongs to the MurCDEF family. MurT subfamily. As to quaternary structure, forms a heterodimer with GatD.

The enzyme catalyses beta-D-GlcNAc-(1-&gt;4)-Mur2Ac(oyl-L-Ala-gamma-D-Glu-L-Lys-D-Ala-D-Ala)-di-trans,octa-cis-undecaprenyl diphosphate + L-glutamine + ATP + H2O = beta-D-GlcNAc-(1-&gt;4)-Mur2Ac(oyl-L-Ala-D-isoglutaminyl-L-Lys-D-Ala-D-Ala)-di-trans,octa-cis-undecaprenyl diphosphate + L-glutamate + ADP + phosphate + H(+). It carries out the reaction beta-D-GlcNAc-(1-&gt;4)-Mur2Ac(oyl-L-Ala-gamma-D-Glu-L-Lys-D-Ala-D-Ala)-di-trans,octa-cis-undecaprenyl diphosphate + ATP = beta-D-GlcNAc-(1-&gt;4)-Mur2Ac(oyl-L-Ala-gamma-D-O-P-Glu-L-Lys-D-Ala-D-Ala)-di-trans,octa-cis-undecaprenyl diphosphate + ADP. It catalyses the reaction beta-D-GlcNAc-(1-&gt;4)-Mur2Ac(oyl-L-Ala-gamma-D-O-P-Glu-L-Lys-D-Ala-D-Ala)-di-trans,octa-cis-undecaprenyl diphosphate + NH4(+) = beta-D-GlcNAc-(1-&gt;4)-Mur2Ac(oyl-L-Ala-D-isoglutaminyl-L-Lys-D-Ala-D-Ala)-di-trans,octa-cis-undecaprenyl diphosphate + phosphate + H(+). The protein operates within cell wall biogenesis; peptidoglycan biosynthesis. In terms of biological role, the lipid II isoglutaminyl synthase complex catalyzes the formation of alpha-D-isoglutamine in the cell wall lipid II stem peptide. The MurT subunit catalyzes the ATP-dependent amidation of D-glutamate residue of lipid II, converting it to an isoglutamine residue. The protein is Lipid II isoglutaminyl synthase (glutamine-hydrolyzing) subunit MurT of Staphylococcus aureus (strain N315).